Consider the following 1100-residue polypeptide: SLIT-ROBO Rho GTPase-activating protein 2 (1100 aa).

The 306-residue stretch at 19 to 324 (TQVKEIRAQL…AAENLEANSD (306 aa)) folds into the F-BAR domain. Coiled-coil stretches lie at residues 170–201 (YNMDSINAESKLKEAEKQEEKQMSRSVRHEEK) and 363–400 (GELIQRCQQLQSRLSTLNIENEEVKKTMEATLQTIQDM). The span at 181-203 (LKEAEKQEEKQMSRSVRHEEKQT) shows a compositional bias: basic and acidic residues. The segment at 181-210 (LKEAEKQEEKQMSRSVRHEEKQTPRSPDSL) is disordered. In terms of domain architecture, Rho-GAP spans 496-680 (VRKQEAIQII…TIIIHHESIF (185 aa)). Residues 738–797 (SDPIEAIARFDYSGRTNRELSFKKGASLLLYSRASDDWWEGRHNGTEGLVPHQYIVVQDM) enclose the SH3 domain. Disordered regions lie at residues 800-835 (GYAGRGSPKADLEGSHDSVEEKVSTRASASSPTGGH) and 852-938 (EATS…PLDP). Over residues 807 to 823 (PKADLEGSHDSVEEKVS) the composition is skewed to basic and acidic residues. Polar residues predominate over residues 919–932 (RKSTPTGRSKSFSN). The stretch at 945-972 (EHSSQDIEATMNTALSELRELERQSNVK) forms a coiled coil. Residues 986-1100 (KSGGTSEPSS…PPPTDKSCPV (115 aa)) form a disordered region. 2 stretches are compositionally biased toward polar residues: residues 987–997 (SGGTSEPSSPL) and 1008–1049 (SQHP…GSTF). Low complexity predominate over residues 1067-1081 (SSSAGGSPAMGSPTT). Residues 1082 to 1094 (TIPPTPPPPPPPT) are compositionally biased toward pro residues.

It localises to the cell membrane. It is found in the cell projection. The protein localises to the dendritic spine. Its subcellular location is the postsynaptic density. The protein resides in the postsynaptic cell membrane. It localises to the lamellipodium. It is found in the cytoplasmic vesicle. The protein localises to the phagosome. Its subcellular location is the nucleus. The protein resides in the cytoplasm. It localises to the cytosol. Its function is as follows. Postsynaptic RAC1 GTPase activating protein (GAP) that plays a key role in neuronal morphogenesis and migration mainly during development of the cerebral cortex. Regulates excitatory and inhibitory synapse maturation and density in cortical pyramidal neurons. Mechanistically, acts by binding and deforming membranes, thereby regulating actin dynamics to regulate cell migration and differentiation. The protein is SLIT-ROBO Rho GTPase-activating protein 2 (srgap2) of Danio rerio (Zebrafish).